A 341-amino-acid polypeptide reads, in one-letter code: GTP 3',8-cyclase (341 aa).

One can recognise a Radical SAM core domain in the interval lysine 11–glutamate 231. Arginine 20 contacts GTP. Positions 27 and 31 each coordinate [4Fe-4S] cluster. Tyrosine 33 is a binding site for S-adenosyl-L-methionine. Cysteine 34 lines the [4Fe-4S] cluster pocket. Arginine 75 contributes to the GTP binding site. Residue glycine 79 participates in S-adenosyl-L-methionine binding. Threonine 106 lines the GTP pocket. An S-adenosyl-L-methionine-binding site is contributed by serine 130. Lysine 167 serves as a coordination point for GTP. Methionine 201 contacts S-adenosyl-L-methionine. [4Fe-4S] cluster contacts are provided by cysteine 265 and cysteine 268. Arginine 270 to arginine 272 lines the GTP pocket. Residue cysteine 282 coordinates [4Fe-4S] cluster.

It belongs to the radical SAM superfamily. MoaA family. In terms of assembly, monomer and homodimer. Requires [4Fe-4S] cluster as cofactor.

The catalysed reaction is GTP + AH2 + S-adenosyl-L-methionine = (8S)-3',8-cyclo-7,8-dihydroguanosine 5'-triphosphate + 5'-deoxyadenosine + L-methionine + A + H(+). Its pathway is cofactor biosynthesis; molybdopterin biosynthesis. Functionally, catalyzes the cyclization of GTP to (8S)-3',8-cyclo-7,8-dihydroguanosine 5'-triphosphate. Required for both nitrate assimilation and respiration. This chain is GTP 3',8-cyclase, found in Bacillus subtilis (strain 168).